We begin with the raw amino-acid sequence, 189 residues long: MVRYVKFSRTANRGVHISAEARINERIRVPEVRLVGPNGEQVGIVRIEDARKLAFDADLDLVEVAPNAKPPVCKIMDYGKFKYEAAQKARESRKNQQQTVVKEQKLRPKIDDHDYETKKNNVIRFLEKGSKVKVTIMFRGREQARPELGYRLLERLANDVVDFGIVETRAKQDGRNMTMVLGPVRKGKK.

This sequence belongs to the IF-3 family. Monomer.

It localises to the cytoplasm. Functionally, IF-3 binds to the 30S ribosomal subunit and shifts the equilibrium between 70S ribosomes and their 50S and 30S subunits in favor of the free subunits, thus enhancing the availability of 30S subunits on which protein synthesis initiation begins. In Corynebacterium glutamicum (strain ATCC 13032 / DSM 20300 / JCM 1318 / BCRC 11384 / CCUG 27702 / LMG 3730 / NBRC 12168 / NCIMB 10025 / NRRL B-2784 / 534), this protein is Translation initiation factor IF-3.